A 201-amino-acid chain; its full sequence is Adenylyl-sulfate kinase (201 aa).

A disordered region spans residues Met1–His23. Gly35–Ser42 provides a ligand contact to ATP. The active-site Phosphoserine intermediate is the Ser109.

The protein belongs to the APS kinase family.

The catalysed reaction is adenosine 5'-phosphosulfate + ATP = 3'-phosphoadenylyl sulfate + ADP + H(+). It participates in sulfur metabolism; hydrogen sulfide biosynthesis; sulfite from sulfate: step 2/3. In terms of biological role, catalyzes the synthesis of activated sulfate. The protein is Adenylyl-sulfate kinase of Escherichia coli O127:H6 (strain E2348/69 / EPEC).